The primary structure comprises 198 residues: Ribonuclease HII (198 aa).

Residues 2-192 (MYYCGIDEAG…IKKIIDNQKN (191 aa)) form the RNase H type-2 domain. A divalent metal cation is bound by residues aspartate 8, glutamate 9, and aspartate 101.

It belongs to the RNase HII family. Mn(2+) is required as a cofactor. Mg(2+) serves as cofactor.

The protein resides in the cytoplasm. It catalyses the reaction Endonucleolytic cleavage to 5'-phosphomonoester.. Its function is as follows. Endonuclease that specifically degrades the RNA of RNA-DNA hybrids. The chain is Ribonuclease HII from Natranaerobius thermophilus (strain ATCC BAA-1301 / DSM 18059 / JW/NM-WN-LF).